Here is a 292-residue protein sequence, read N- to C-terminus: Acetylglutamate kinase (292 aa).

Substrate is bound by residues 60-61 (GG), Arg82, and Asn187.

The protein belongs to the acetylglutamate kinase family. ArgB subfamily.

Its subcellular location is the cytoplasm. The enzyme catalyses N-acetyl-L-glutamate + ATP = N-acetyl-L-glutamyl 5-phosphate + ADP. Its pathway is amino-acid biosynthesis; L-arginine biosynthesis; N(2)-acetyl-L-ornithine from L-glutamate: step 2/4. In terms of biological role, catalyzes the ATP-dependent phosphorylation of N-acetyl-L-glutamate. This chain is Acetylglutamate kinase, found in Methanobrevibacter smithii (strain ATCC 35061 / DSM 861 / OCM 144 / PS).